The sequence spans 219 residues: Orotate phosphoribosyltransferase (219 aa).

Position 26 (lysine 26) interacts with 5-phospho-alpha-D-ribose 1-diphosphate. 34–35 contributes to the orotate binding site; sequence FF. Residues 72 to 73, arginine 98, lysine 99, lysine 102, histidine 104, and 124 to 132 each bind 5-phospho-alpha-D-ribose 1-diphosphate; these read YK and DDVITAGTA. Orotate-binding residues include threonine 128 and arginine 156.

It belongs to the purine/pyrimidine phosphoribosyltransferase family. PyrE subfamily. In terms of assembly, homodimer. The cofactor is Mg(2+).

It catalyses the reaction orotidine 5'-phosphate + diphosphate = orotate + 5-phospho-alpha-D-ribose 1-diphosphate. It functions in the pathway pyrimidine metabolism; UMP biosynthesis via de novo pathway; UMP from orotate: step 1/2. Catalyzes the transfer of a ribosyl phosphate group from 5-phosphoribose 1-diphosphate to orotate, leading to the formation of orotidine monophosphate (OMP). The chain is Orotate phosphoribosyltransferase from Xylella fastidiosa (strain M23).